A 600-amino-acid chain; its full sequence is Dihydroxy-acid dehydratase (600 aa).

Asp82 serves as a coordination point for Mg(2+). Residue Cys123 participates in [2Fe-2S] cluster binding. Asp124 and Lys125 together coordinate Mg(2+). Position 125 is an N6-carboxylysine (Lys125). Position 192 (Cys192) interacts with [2Fe-2S] cluster. Glu489 is a binding site for Mg(2+). Ser515 acts as the Proton acceptor in catalysis.

The protein belongs to the IlvD/Edd family. Homodimer. [2Fe-2S] cluster is required as a cofactor. Requires Mg(2+) as cofactor.

The enzyme catalyses (2R)-2,3-dihydroxy-3-methylbutanoate = 3-methyl-2-oxobutanoate + H2O. It catalyses the reaction (2R,3R)-2,3-dihydroxy-3-methylpentanoate = (S)-3-methyl-2-oxopentanoate + H2O. It participates in amino-acid biosynthesis; L-isoleucine biosynthesis; L-isoleucine from 2-oxobutanoate: step 3/4. Its pathway is amino-acid biosynthesis; L-valine biosynthesis; L-valine from pyruvate: step 3/4. Its function is as follows. Functions in the biosynthesis of branched-chain amino acids. Catalyzes the dehydration of (2R,3R)-2,3-dihydroxy-3-methylpentanoate (2,3-dihydroxy-3-methylvalerate) into 2-oxo-3-methylpentanoate (2-oxo-3-methylvalerate) and of (2R)-2,3-dihydroxy-3-methylbutanoate (2,3-dihydroxyisovalerate) into 2-oxo-3-methylbutanoate (2-oxoisovalerate), the penultimate precursor to L-isoleucine and L-valine, respectively. The sequence is that of Dihydroxy-acid dehydratase from Bacteroides thetaiotaomicron (strain ATCC 29148 / DSM 2079 / JCM 5827 / CCUG 10774 / NCTC 10582 / VPI-5482 / E50).